The following is a 92-amino-acid chain: Small ribosomal subunit protein uS19 (92 aa).

The protein belongs to the universal ribosomal protein uS19 family.

Protein S19 forms a complex with S13 that binds strongly to the 16S ribosomal RNA. The polypeptide is Small ribosomal subunit protein uS19 (Caulobacter vibrioides (strain ATCC 19089 / CIP 103742 / CB 15) (Caulobacter crescentus)).